Here is a 274-residue protein sequence, read N- to C-terminus: Putative pyruvate, phosphate dikinase regulatory protein (274 aa).

Gly-153–Thr-160 provides a ligand contact to ADP.

The protein belongs to the pyruvate, phosphate/water dikinase regulatory protein family. PDRP subfamily.

The catalysed reaction is N(tele)-phospho-L-histidyl/L-threonyl-[pyruvate, phosphate dikinase] + ADP = N(tele)-phospho-L-histidyl/O-phospho-L-threonyl-[pyruvate, phosphate dikinase] + AMP + H(+). It catalyses the reaction N(tele)-phospho-L-histidyl/O-phospho-L-threonyl-[pyruvate, phosphate dikinase] + phosphate + H(+) = N(tele)-phospho-L-histidyl/L-threonyl-[pyruvate, phosphate dikinase] + diphosphate. In terms of biological role, bifunctional serine/threonine kinase and phosphorylase involved in the regulation of the pyruvate, phosphate dikinase (PPDK) by catalyzing its phosphorylation/dephosphorylation. The polypeptide is Putative pyruvate, phosphate dikinase regulatory protein (Bartonella henselae (strain ATCC 49882 / DSM 28221 / CCUG 30454 / Houston 1) (Rochalimaea henselae)).